A 138-amino-acid chain; its full sequence is Large ribosomal subunit protein mL54 (138 aa).

The N-terminal 16 residues, 1–16, are a transit peptide targeting the mitochondrion; it reads MAARRLFGATGSWARW.

Belongs to the mitochondrion-specific ribosomal protein mL54 family. In terms of assembly, component of the mitochondrial ribosome large subunit (39S) which comprises a 16S rRNA and about 50 distinct proteins.

It is found in the mitochondrion. In Bos taurus (Bovine), this protein is Large ribosomal subunit protein mL54 (MRPL54).